The sequence spans 578 residues: Proteasome-associated ATPase (578 aa).

Positions 8–84 form a coiled coil; the sequence is TAAELRNQVR…LKEEVDRLAQ (77 aa). 267–272 lines the ATP pocket; it reads GCGKTL. A docks into pockets in the proteasome alpha-ring region spans residues 577–578; it reads YL.

Belongs to the AAA ATPase family. Homohexamer. Assembles into a hexameric ring structure that caps the 20S proteasome core. Strongly interacts with the prokaryotic ubiquitin-like protein Pup through a hydrophobic interface; the interacting region of ARC lies in its N-terminal coiled-coil domain. There is one Pup binding site per ARC hexamer ring. Upon ATP-binding, the C-terminus of ARC interacts with the alpha-rings of the proteasome core, possibly by binding to the intersubunit pockets.

The protein operates within protein degradation; proteasomal Pup-dependent pathway. In terms of biological role, ATPase which is responsible for recognizing, binding, unfolding and translocation of pupylated proteins into the bacterial 20S proteasome core particle. May be essential for opening the gate of the 20S proteasome via an interaction with its C-terminus, thereby allowing substrate entry and access to the site of proteolysis. Thus, the C-termini of the proteasomal ATPase may function like a 'key in a lock' to induce gate opening and therefore regulate proteolysis. The chain is Proteasome-associated ATPase from Kribbella flavida (strain DSM 17836 / JCM 10339 / NBRC 14399).